The primary structure comprises 342 residues: Acetoin:2,6-dichlorophenolindophenol oxidoreductase subunit beta (342 aa).

Tetramer of 2 alpha and 2 beta subunits.

It functions in the pathway ketone degradation; acetoin degradation. Catalyzes the 2,6-dichlorophenolindophenol-dependent cleavage of acetoin into acetate and acetaldehyde. The protein is Acetoin:2,6-dichlorophenolindophenol oxidoreductase subunit beta (acoB) of Bacillus subtilis (strain 168).